The sequence spans 666 residues: MKQYAIQPATLEFNAEGTPVSRDFDDVYFSNDNGLEETRYVFLGGNRLAERFPVHSHPLFIVAESGFGTGLNFLTLWQAFDSFRSAHPQATLQRLHFISFEKFPLTRDDLALAHQHWPELAPWAEQLQAQWPLPLPGCHRLLLDRSRVTLDLWFGDINELTDQLDATLNQTVDAWFLDGFAPAKNPDMWTPNLFNAMARLARPGATLATFTSAGFVRRGLQEAGFTMQKRKGFGRKREMLCGVMEQHLMPTLYAPWFYRSGSEKRETAIIGGGIASALLSLALLRRGWQVTLYCADDQPAQGASGNRQGALYPLLSKHDAAINRFFPTAFTFARRLYDALPVSFDHDWCGVTQLGWDEKSQQKIAQMLSLALPAELASALNAEEAEQAVGVTTRCGGITYPAGGWLCPEQLTRAVIALATEQGLQTRFRHTLTSLVAQESRWQLRFMSGETASHETVVLANGHQINRFDQTRPLPVYAVGGQVSHIPTTPALSALRQVLCYDGYLTPQNPHNQQHCIGASYHRGDESTVWREEDQRQNRQRLLDCFPDAKWATEVDVSGNSARCGVRCATRDHLPMVGNVPDYHATLTHYADLADNKTSAAPAPVYPGLFVLGALGSRGLCSAPLCAEILAAQMSNEPIPLDAGTLAALNPNRLWVRKLLKGKAVK.

Residues 1-245 (MKQYAIQPAT…KREMLCGVME (245 aa)) are tRNA (mnm(5)s(2)U34)-methyltransferase. The FAD-dependent cmnm(5)s(2)U34 oxidoreductase stretch occupies residues 270 to 666 (IGGGIASALL…RKLLKGKAVK (397 aa)).

In the N-terminal section; belongs to the methyltransferase superfamily. tRNA (mnm(5)s(2)U34)-methyltransferase family. This sequence in the C-terminal section; belongs to the DAO family. FAD is required as a cofactor.

Its subcellular location is the cytoplasm. It carries out the reaction 5-aminomethyl-2-thiouridine(34) in tRNA + S-adenosyl-L-methionine = 5-methylaminomethyl-2-thiouridine(34) in tRNA + S-adenosyl-L-homocysteine + H(+). Its function is as follows. Catalyzes the last two steps in the biosynthesis of 5-methylaminomethyl-2-thiouridine (mnm(5)s(2)U) at the wobble position (U34) in tRNA. Catalyzes the FAD-dependent demodification of cmnm(5)s(2)U34 to nm(5)s(2)U34, followed by the transfer of a methyl group from S-adenosyl-L-methionine to nm(5)s(2)U34, to form mnm(5)s(2)U34. The sequence is that of tRNA 5-methylaminomethyl-2-thiouridine biosynthesis bifunctional protein MnmC from Salmonella choleraesuis (strain SC-B67).